The following is a 340-amino-acid chain: Protein RecA (340 aa).

65–72 (GPESGGKT) contacts ATP.

The protein belongs to the RecA family.

The protein localises to the cytoplasm. Can catalyze the hydrolysis of ATP in the presence of single-stranded DNA, the ATP-dependent uptake of single-stranded DNA by duplex DNA, and the ATP-dependent hybridization of homologous single-stranded DNAs. It interacts with LexA causing its activation and leading to its autocatalytic cleavage. The polypeptide is Protein RecA (Thermus thermophilus (strain ATCC BAA-163 / DSM 7039 / HB27)).